The primary structure comprises 58 residues: UPF0391 membrane protein Sbal_1421 (58 aa).

2 consecutive transmembrane segments (helical) span residues 6 to 26 (LVFLVVAVIAGLLGFTGIAGA) and 28 to 48 (AGIAKIIFLIFIVLLVISLLV).

Belongs to the UPF0391 family.

It is found in the cell membrane. The protein is UPF0391 membrane protein Sbal_1421 of Shewanella baltica (strain OS155 / ATCC BAA-1091).